Consider the following 148-residue polypeptide: 3-dehydroquinate dehydratase (148 aa).

The active-site Proton acceptor is the tyrosine 24. Substrate contacts are provided by asparagine 75, histidine 81, and aspartate 88. Histidine 101 serves as the catalytic Proton donor. Substrate is bound by residues 102-103 (LS) and arginine 112.

It belongs to the type-II 3-dehydroquinase family. Homododecamer.

It carries out the reaction 3-dehydroquinate = 3-dehydroshikimate + H2O. It participates in metabolic intermediate biosynthesis; chorismate biosynthesis; chorismate from D-erythrose 4-phosphate and phosphoenolpyruvate: step 3/7. Its function is as follows. Catalyzes a trans-dehydration via an enolate intermediate. The polypeptide is 3-dehydroquinate dehydratase (Sinorhizobium medicae (strain WSM419) (Ensifer medicae)).